Here is a 443-residue protein sequence, read N- to C-terminus: Arginine biosynthesis bifunctional protein ArgJ, mitochondrial (443 aa).

Residues Thr179, Lys206, Thr217, Glu303, Asn438, and Ser443 each contribute to the substrate site. Residue Thr217 is the Nucleophile of the active site.

It belongs to the ArgJ family. As to quaternary structure, heterodimer of an alpha and a beta chain. The alpha and beta chains are autoproteolytically processed from a single precursor protein within the mitochondrion.

It is found in the mitochondrion matrix. It carries out the reaction N(2)-acetyl-L-ornithine + L-glutamate = N-acetyl-L-glutamate + L-ornithine. The enzyme catalyses L-glutamate + acetyl-CoA = N-acetyl-L-glutamate + CoA + H(+). It participates in amino-acid biosynthesis; L-arginine biosynthesis; L-ornithine and N-acetyl-L-glutamate from L-glutamate and N(2)-acetyl-L-ornithine (cyclic): step 1/1. It functions in the pathway amino-acid biosynthesis; L-arginine biosynthesis; N(2)-acetyl-L-ornithine from L-glutamate: step 1/4. In terms of biological role, catalyzes two activities which are involved in the cyclic version of arginine biosynthesis: the synthesis of acetylglutamate from glutamate and acetyl-CoA, and of ornithine by transacetylation between acetylornithine and glutamate. This chain is Arginine biosynthesis bifunctional protein ArgJ, mitochondrial, found in Eremothecium gossypii (strain ATCC 10895 / CBS 109.51 / FGSC 9923 / NRRL Y-1056) (Yeast).